The primary structure comprises 445 residues: MSELTKELMELVWGTKSSPGLSDTIFCRWTQGFVFSESEGSALEQFEGGPCAVIAPVQAFLLKKLLFSSEKSSWRDCSEEEQKELLCHTLCDILESACCDHSGSYCLVSWLRGKTTEETASISGSPAESSCQVEHSSALAVEELGFERFHALIQKRSFRSLPELKDAVLDQYSMWGNKFGVLLFLYSVLLTKGIENIKNEIEDASEPLIDPVYGHGSQSLINLLLTGHAVSNVWDGDRECSGMKLLGIHEQAAVGFLTLMEALRYCKVGSYLKSPKFPIWIVGSETHLTVFFAKDMALVAPEAPSEQARRVFQTYDPEDNGFIPDSLLEDVMKALDLVSDPEYINLMKNKLDPEGLGIILLGPFLQEFFPDQGSSGPESFTVYHYNGLKQSNYNEKVMYVEGTAVVMGFEDPMLQTDDTPIKRCLQTKWPYIELLWTTDRSPSLN.

The active-site Nucleophile is Cys-51. The residue at position 125 (Ser-125) is a Phosphoserine. His-287 acts as the Proton acceptor in catalysis.

The protein belongs to the MINDY deubiquitinase family. FAM188 subfamily. Interacts with COPS5. As to expression, widely expressed with high levels in heart, skeletal muscle, and kidney, and low levels in liver and brain. Also expressed in lung (at protein level).

It is found in the nucleus. The catalysed reaction is Thiol-dependent hydrolysis of ester, thioester, amide, peptide and isopeptide bonds formed by the C-terminal Gly of ubiquitin (a 76-residue protein attached to proteins as an intracellular targeting signal).. Its function is as follows. Hydrolase that can remove 'Lys-48'-linked conjugated ubiquitin from proteins. The chain is Ubiquitin carboxyl-terminal hydrolase MINDY-3 from Homo sapiens (Human).